The following is a 327-amino-acid chain: Tagatose 1,6-diphosphate aldolase 2 (327 aa).

The protein belongs to the aldolase LacD family.

It carries out the reaction D-tagatofuranose 1,6-bisphosphate = D-glyceraldehyde 3-phosphate + dihydroxyacetone phosphate. The protein operates within carbohydrate metabolism; D-tagatose 6-phosphate degradation; D-glyceraldehyde 3-phosphate and glycerone phosphate from D-tagatose 6-phosphate: step 2/2. In Streptococcus pyogenes serotype M3 (strain ATCC BAA-595 / MGAS315), this protein is Tagatose 1,6-diphosphate aldolase 2 (lacD2).